The sequence spans 417 residues: Imidazolonepropionase (417 aa).

Residues His-80 and His-82 each coordinate Fe(3+). Zn(2+) contacts are provided by His-80 and His-82. Residues Arg-89, Tyr-152, and His-187 each contribute to the 4-imidazolone-5-propanoate site. Tyr-152 lines the N-formimidoyl-L-glutamate pocket. Residue His-252 coordinates Fe(3+). A Zn(2+)-binding site is contributed by His-252. Glu-255 lines the 4-imidazolone-5-propanoate pocket. Residue Asp-326 participates in Fe(3+) binding. Asp-326 contacts Zn(2+). 2 residues coordinate N-formimidoyl-L-glutamate: Asn-328 and Gly-330. A 4-imidazolone-5-propanoate-binding site is contributed by Ser-331.

This sequence belongs to the metallo-dependent hydrolases superfamily. HutI family. Zn(2+) is required as a cofactor. Requires Fe(3+) as cofactor.

It is found in the cytoplasm. The enzyme catalyses 4-imidazolone-5-propanoate + H2O = N-formimidoyl-L-glutamate. The protein operates within amino-acid degradation; L-histidine degradation into L-glutamate; N-formimidoyl-L-glutamate from L-histidine: step 3/3. Catalyzes the hydrolytic cleavage of the carbon-nitrogen bond in imidazolone-5-propanoate to yield N-formimidoyl-L-glutamate. It is the third step in the universal histidine degradation pathway. The polypeptide is Imidazolonepropionase (Bacteroides fragilis (strain YCH46)).